A 250-amino-acid chain; its full sequence is 3-deoxy-manno-octulosonate cytidylyltransferase 1 (250 aa).

The protein belongs to the KdsB family.

It is found in the cytoplasm. The enzyme catalyses 3-deoxy-alpha-D-manno-oct-2-ulosonate + CTP = CMP-3-deoxy-beta-D-manno-octulosonate + diphosphate. The protein operates within nucleotide-sugar biosynthesis; CMP-3-deoxy-D-manno-octulosonate biosynthesis; CMP-3-deoxy-D-manno-octulosonate from 3-deoxy-D-manno-octulosonate and CTP: step 1/1. Its pathway is bacterial outer membrane biogenesis; lipopolysaccharide biosynthesis. In terms of biological role, activates KDO (a required 8-carbon sugar) for incorporation into bacterial lipopolysaccharide in Gram-negative bacteria. The polypeptide is 3-deoxy-manno-octulosonate cytidylyltransferase 1 (Actinobacillus pleuropneumoniae serotype 5b (strain L20)).